Reading from the N-terminus, the 190-residue chain is Major intrinsically disordered NOTCH2-binding receptor 1-like (190 aa).

Residue Ser-79 is modified to Phosphoserine. Asn-109 and Asn-125 each carry an N-linked (GlcNAc...) asparagine glycan. The chain crosses the membrane as a helical span at residues 169–189 (GLILLVVISILVTIVTIITFF).

It belongs to the MINAR family. As to quaternary structure, interacts with NOTCH2. Highly expressed in the auditory hair cells.

Its subcellular location is the lysosome membrane. It localises to the endoplasmic reticulum membrane. In terms of biological role, binds cholesterol and may regulate the distribution and homeostasis of cholesterol in hair cells. May play a role in angiogenesis. The chain is Major intrinsically disordered NOTCH2-binding receptor 1-like from Homo sapiens (Human).